The primary structure comprises 300 residues: Porphobilinogen deaminase (300 aa).

Residue C239 is modified to S-(dipyrrolylmethanemethyl)cysteine.

It belongs to the HMBS family. Monomer. The cofactor is dipyrromethane.

The enzyme catalyses 4 porphobilinogen + H2O = hydroxymethylbilane + 4 NH4(+). It functions in the pathway porphyrin-containing compound metabolism; protoporphyrin-IX biosynthesis; coproporphyrinogen-III from 5-aminolevulinate: step 2/4. Functionally, tetrapolymerization of the monopyrrole PBG into the hydroxymethylbilane pre-uroporphyrinogen in several discrete steps. This is Porphobilinogen deaminase from Francisella tularensis subsp. holarctica (strain OSU18).